Here is a 136-residue protein sequence, read N- to C-terminus: NADPH-dependent 7-cyano-7-deazaguanine reductase (136 aa).

Cys-50 functions as the Thioimide intermediate in the catalytic mechanism. Catalysis depends on Asp-57, which acts as the Proton donor. Substrate contacts are provided by residues 72 to 74 and 91 to 92; these read YEL and HE.

Belongs to the GTP cyclohydrolase I family. QueF type 1 subfamily.

The protein localises to the cytoplasm. It catalyses the reaction 7-aminomethyl-7-carbaguanine + 2 NADP(+) = 7-cyano-7-deazaguanine + 2 NADPH + 3 H(+). Its pathway is tRNA modification; tRNA-queuosine biosynthesis. In terms of biological role, catalyzes the NADPH-dependent reduction of 7-cyano-7-deazaguanine (preQ0) to 7-aminomethyl-7-deazaguanine (preQ1). This chain is NADPH-dependent 7-cyano-7-deazaguanine reductase, found in Prochlorococcus marinus (strain MIT 9215).